Here is a 469-residue protein sequence, read N- to C-terminus: MAEACEPTRPSEDEDEEREPLLPRVAWAQPRRVAPGSAVRMQADEGADVLREPATDEPPAVSGEGSISASLSTELDRTRTTSSETNTFLEDPEFADIVLKAEQAIEIGVFPERISQGSSGSYFVKDSKRNIIGVFKPKSEEPYGQLNPKWTKYVHKVCCPCCFGRGCLLPNQGYLSEAGAYLVDVKLNLGIVPKTKVVWLVSETFNYSAIDRAKSRGKKYALEKVPKVGRKFHRIGLPPKVGSFQLFVKDYKEAEYWLRRFEAEPLPENIRKQFQSQFEKLVILDYIIRNTDRGNDNWLVKYDEMKYAKKIESEESNWIDNKQLLIKIAAIDNGLAFPFKHPDEWRAYPFHWAWLPQAKVPFSEETRNLILPYISDMNFVQDLCEDLYELFKTDKGFDRAAFENQMSVMRGQILNLTQALRDGKSPMQLAQMPCVIVECSKSGSQGRVVHLGSSFTQTVHCRKPFFSSW.

The segment at M1–E84 is disordered. The residue at position 37 (S37) is a Phosphoserine. One can recognise a PI3K/PI4K catalytic domain in the interval G108–C439. The tract at residues I114–G120 is G-loop. 2 residues coordinate ATP: S121 and K136. Residues E141–Y143 form an important for substrate binding region. Residues K149–C162 form an important for interaction with membranes region. ATP contacts are provided by residues Q245–V248 and R259–R260. Residues K252–R260 form an important for interaction with membranes region. Residues R289–N297 are catalytic loop. The interval A330–F350 is activation loop. D332 lines the ATP pocket. Residues W345–W354 are important for interaction with membranes.

It belongs to the PI3/PI4-kinase family. Type II PI4K subfamily.

The protein localises to the cytoplasm. Its subcellular location is the cytosol. The protein resides in the golgi apparatus membrane. It localises to the endoplasmic reticulum membrane. It is found in the cell membrane. The protein localises to the early endosome membrane. It catalyses the reaction a 1,2-diacyl-sn-glycero-3-phospho-(1D-myo-inositol) + ATP = a 1,2-diacyl-sn-glycero-3-phospho-(1D-myo-inositol 4-phosphate) + ADP + H(+). Its function is as follows. Together with PI4K2A and the type III PI4Ks (PIK4CA and PIK4CB) it contributes to the overall PI4-kinase activity of the cell. This contribution may be especially significant in plasma membrane, endosomal and Golgi compartments. The phosphorylation of phosphatidylinositol (PI) to PI4P is the first committed step in the generation of phosphatidylinositol 4,5-bisphosphate (PIP2), a precursor of the second messenger inositol 1,4,5-trisphosphate (InsP3). Contributes to the production of InsP3 in stimulated cells and is likely to be involved in the regulation of vesicular trafficking. This Mus musculus (Mouse) protein is Phosphatidylinositol 4-kinase type 2-beta (Pi4k2b).